A 305-amino-acid chain; its full sequence is Aspartate carbamoyltransferase catalytic subunit (305 aa).

2 residues coordinate carbamoyl phosphate: Arg-51 and Thr-52. Lys-79 provides a ligand contact to L-aspartate. Carbamoyl phosphate is bound by residues Arg-101, His-129, and Gln-132. L-aspartate is bound by residues Arg-165 and Arg-220. Residues Gly-258 and Pro-259 each contribute to the carbamoyl phosphate site.

It belongs to the aspartate/ornithine carbamoyltransferase superfamily. ATCase family. In terms of assembly, heterododecamer (2C3:3R2) of six catalytic PyrB chains organized as two trimers (C3), and six regulatory PyrI chains organized as three dimers (R2).

It carries out the reaction carbamoyl phosphate + L-aspartate = N-carbamoyl-L-aspartate + phosphate + H(+). It functions in the pathway pyrimidine metabolism; UMP biosynthesis via de novo pathway; (S)-dihydroorotate from bicarbonate: step 2/3. In terms of biological role, catalyzes the condensation of carbamoyl phosphate and aspartate to form carbamoyl aspartate and inorganic phosphate, the committed step in the de novo pyrimidine nucleotide biosynthesis pathway. The protein is Aspartate carbamoyltransferase catalytic subunit of Rubrobacter xylanophilus (strain DSM 9941 / JCM 11954 / NBRC 16129 / PRD-1).